We begin with the raw amino-acid sequence, 370 residues long: Glutamate 5-kinase (370 aa).

Lys-17 contributes to the ATP binding site. The substrate site is built by Ser-57, Asp-144, and Asn-156. ATP-binding positions include 176–177 and 220–226; these read SD and TGGMASK. Residues 282–360 enclose the PUA domain; sequence AGALTLDDGA…HELPVEMRRP (79 aa).

Belongs to the glutamate 5-kinase family.

The protein localises to the cytoplasm. It carries out the reaction L-glutamate + ATP = L-glutamyl 5-phosphate + ADP. It participates in amino-acid biosynthesis; L-proline biosynthesis; L-glutamate 5-semialdehyde from L-glutamate: step 1/2. Its function is as follows. Catalyzes the transfer of a phosphate group to glutamate to form L-glutamate 5-phosphate. The sequence is that of Glutamate 5-kinase from Mycolicibacterium smegmatis (strain ATCC 700084 / mc(2)155) (Mycobacterium smegmatis).